The chain runs to 510 residues: Acyl-CoA desaturase 1 (510 aa).

Residues 1 to 112 (MPTSGTTIEL…TLNNWHQHLN (112 aa)) lie on the Cytoplasmic side of the membrane. A helical membrane pass occupies residues 113–133 (WLNMVLVCGMPMIGWYFALSG). Over 134 to 138 (KVPLH) the chain is Lumenal. Residues 139–159 (LNVFLFSVFYYAVGGVSITAG) form a helical membrane-spanning segment. Over 160–255 (YHRLWSHRSY…DWTIRFQHRH (96 aa)) the chain is Cytoplasmic. Fe cation is bound by residues H161, H166, H198, H201, and H202. The short motif at 161–166 (HRLWSH) is the Histidine box-1 element. The Histidine box-2 signature appears at 198–202 (HRIHH). A helical transmembrane segment spans residues 256–276 (YILLMLLTAFVIPTLICGYFF). Residues 277–280 (NDYM) lie on the Lumenal side of the membrane. Residues 281–301 (GGLIYAGFIRVFVIQQATFCI) form a helical membrane-spanning segment. At 302–510 (NSLAHYIGTQ…GEIYETGKFF (209 aa)) the chain is on the cytoplasmic side. Fe cation contacts are provided by H306, H335, H338, and H339. A Histidine box-3 motif is present at residues 335–339 (HNFHH). In terms of domain architecture, Cytochrome b5 heme-binding spans 409-487 (LPMWDKQTFL…LADMRVAVIK (79 aa)). Heme is bound by residues H444 and H470.

It belongs to the fatty acid desaturase type 1 family. It depends on Fe(2+) as a cofactor.

Its subcellular location is the endoplasmic reticulum membrane. It carries out the reaction octadecanoyl-CoA + 2 Fe(II)-[cytochrome b5] + O2 + 2 H(+) = (9Z)-octadecenoyl-CoA + 2 Fe(III)-[cytochrome b5] + 2 H2O. The enzyme catalyses hexadecanoyl-CoA + 2 Fe(II)-[cytochrome b5] + O2 + 2 H(+) = (9Z)-hexadecenoyl-CoA + 2 Fe(III)-[cytochrome b5] + 2 H2O. Functionally, stearoyl-CoA desaturase that utilizes O(2) and electrons from reduced cytochrome b5 to introduce the first double bond into saturated fatty acyl-CoA substrates. Catalyzes the insertion of a cis double bond at the delta-9 position into fatty acyl-CoA substrates including palmitoyl-CoA and stearoyl-CoA. Required for the biosynthesis of membrane phospholipids, cholesterol esters and triglycerides. Regulates fatty acid desaturation, that is, the ratio of unsaturated versus saturated fatty acyl chains, by competing with the acyltransferase STC1 for the common substrate C16:0-CoA. SCT1 sequesters C16:0-CoA into lipids, thereby shielding it from desaturation by OLE1. This is Acyl-CoA desaturase 1 (OLE1) from Saccharomyces cerevisiae (strain ATCC 204508 / S288c) (Baker's yeast).